The primary structure comprises 720 residues: F-box/LRR-repeat MAX2 homolog (720 aa).

One can recognise an F-box domain in the interval 14-60; sequence SSAILDLPEPLLLHILSFLTDVRSRHRAALACGRMRAAERATRSELS. LRR repeat units lie at residues 71 to 134, 135 to 158, 159 to 189, 190 to 218, 219 to 247, 248 to 279, 280 to 316, 317 to 344, 345 to 372, 373 to 398, 399 to 435, 436 to 452, 453 to 510, 511 to 537, 538 to 571, 572 to 606, 607 to 644, and 645 to 720; these read LFLS…QNAF, IAARLAGCFPAVTSLAVYCRDPTT, LANLTPHWQASLRRVKLVRWHQRPPTLPDGA, DLEPLLETCAALRELDLSEFYCWTEDVVR, ALTTHPSATAALTHLDLGLAAATDGFKSS, ELGPIAASCPNLRKLVAPCLFNPRFSDCVGDD, ALLSLATSCPRLTVLRLSEPFEAAANIQREEAAITVA, GLVAFFAALPALEDFTMDLQHNVLEAAP, AMEALARRCPRIKFLTLGSFQGLCKASW, LHLDGVAVCGGLESLYMKNCQDLTDA, SLAAIGRGCRRLAKFGIHGCDLVTSAGIRRLAFTLRP, TLKEVTVLHCRLLHTAE, CLTA…KCRY, MEFDDLGSWEMLRSLSLWFSAGQLLSP, LISAGLDSCPVLEEISIKVEGDCRTCPRPAPRTI, FGLSDLAGFPVLAKMKLDLSEAVGYALTAPTGQMD, LSLWERFYLHGIESLQTLYELDYWPPQDKDVHHRSLTL, and PAVG…QIDD.

As to quaternary structure, associates to a SCF (SKP1-CUL1-F-box protein) E3 ubiquitin-protein ligase complex. Interacts with D14 in a strigolactone-dependent manner. Interacts with SKP1, SKP5 and SKP20. As to expression, expressed in leaves. Expressed in roots, culms, leaf blades, leaf sheaths, shoot bases and panicles.

It localises to the nucleus. Involved in strigolactone (SL) signaling. Required for responses to SLs and the establishment of arbuscular mycorrhiza symbiosis in rice. Strigolactone-dependent association of D3 with D14 and D53 (a repressor of SL signaling) triggers D53 ubiquitination and degradation. Controls tillering by suppressing axillary bud activity. Tiller is a specialized grain-bearing branch that is formed on the unelongated basal internode and grows independently of the mother stem (culm) by means of its own adventitious roots. This Oryza sativa subsp. japonica (Rice) protein is F-box/LRR-repeat MAX2 homolog.